Here is a 206-residue protein sequence, read N- to C-terminus: MARYLGPKLKLSRREGTDLFLKSGVRAIDTKCKIEQAPGQHGARKPRLSDYGVQLREKQKVRRIYGVLERQFRNYYKEAARLKGNTGENLLALLEGRLDNVVYRMGFGATRAEARQLVSHKAIMVPGRVVNIASYQVSPNDVVSIREKAKKQSRVKAALELAEQREKPTWLEVDAGKMEGTFKRKPERSDLSADINEHLIVELYSK.

In terms of domain architecture, S4 RNA-binding spans 96–156; it reads GRLDNVVYRM…EKAKKQSRVK (61 aa).

The protein belongs to the universal ribosomal protein uS4 family. Part of the 30S ribosomal subunit. Contacts protein S5. The interaction surface between S4 and S5 is involved in control of translational fidelity.

Functionally, one of the primary rRNA binding proteins, it binds directly to 16S rRNA where it nucleates assembly of the body of the 30S subunit. Its function is as follows. With S5 and S12 plays an important role in translational accuracy. The polypeptide is Small ribosomal subunit protein uS4 (Shigella flexneri).